The sequence spans 447 residues: Argininosuccinate synthase (447 aa).

Residues 20-28 and A46 each bind ATP; that span reads AFSGGLDTS. Y102 contributes to the L-citrulline binding site. G132 and T134 together coordinate ATP. T134, N138, and D139 together coordinate L-aspartate. Residue N138 coordinates L-citrulline. D139 is an ATP binding site. Positions 142 and 195 each coordinate L-citrulline. D197 is an ATP binding site. Residues T204, E206, and E283 each contribute to the L-citrulline site.

The protein belongs to the argininosuccinate synthase family. Type 2 subfamily. Homotetramer.

The protein resides in the cytoplasm. The catalysed reaction is L-citrulline + L-aspartate + ATP = 2-(N(omega)-L-arginino)succinate + AMP + diphosphate + H(+). It functions in the pathway amino-acid biosynthesis; L-arginine biosynthesis; L-arginine from L-ornithine and carbamoyl phosphate: step 2/3. This chain is Argininosuccinate synthase, found in Neisseria meningitidis serogroup C / serotype 2a (strain ATCC 700532 / DSM 15464 / FAM18).